Here is a 287-residue protein sequence, read N- to C-terminus: MTPSPLPLSPLRSHIIRELHVQPDIDPGAEVERRVAFLCDYLQSTPTKGFVLGISGGQDSTLAGRLCQLAVERRRSQGHGATFLAVRLPYGVQADEADAQQALDFIQADREVTVNIKEAADASVAAAQAALGSEVRDFVRGNVKARERMVAQYALAGQENLLVVGTDHAAEALTGFYTKYGDGGVDLTPLSGLTKRQGAQLLAHLGAPEGTWRKVPTADLEDDRPGLPDEVALGVTYAQIDAYLEGREVSDEAAARLERLFLNSRHKRALPVTPFDGWWQPGEQKQS.

53 to 60 provides a ligand contact to ATP; that stretch reads GISGGQDS. Aspartate 59 is a binding site for Mg(2+). Arginine 146 contributes to the deamido-NAD(+) binding site. Threonine 166 contacts ATP. Residue glutamate 171 coordinates Mg(2+). The deamido-NAD(+) site is built by lysine 179 and aspartate 186. ATP is bound by residues lysine 195 and threonine 217. 266–267 serves as a coordination point for deamido-NAD(+); sequence HK.

This sequence belongs to the NAD synthetase family. Homodimer.

The enzyme catalyses deamido-NAD(+) + NH4(+) + ATP = AMP + diphosphate + NAD(+) + H(+). It participates in cofactor biosynthesis; NAD(+) biosynthesis; NAD(+) from deamido-NAD(+) (ammonia route): step 1/1. In terms of biological role, catalyzes the ATP-dependent amidation of deamido-NAD to form NAD. Uses ammonia as a nitrogen source. The protein is NH(3)-dependent NAD(+) synthetase of Deinococcus radiodurans (strain ATCC 13939 / DSM 20539 / JCM 16871 / CCUG 27074 / LMG 4051 / NBRC 15346 / NCIMB 9279 / VKM B-1422 / R1).